The primary structure comprises 299 residues: Biotin synthase (299 aa).

The 231-residue stretch at 22–252 (TSNLKLDLCS…NVTIKIAAGR (231 aa)) folds into the Radical SAM core domain. Residues Cys-40, Cys-44, and Cys-47 each contribute to the [4Fe-4S] cluster site. [2Fe-2S] cluster-binding residues include Cys-116, Cys-176, and Lys-247.

The protein belongs to the radical SAM superfamily. Biotin synthase family. Homodimer. It depends on [4Fe-4S] cluster as a cofactor. Requires [2Fe-2S] cluster as cofactor.

The enzyme catalyses (4R,5S)-dethiobiotin + (sulfur carrier)-SH + 2 reduced [2Fe-2S]-[ferredoxin] + 2 S-adenosyl-L-methionine = (sulfur carrier)-H + biotin + 2 5'-deoxyadenosine + 2 L-methionine + 2 oxidized [2Fe-2S]-[ferredoxin]. Its pathway is cofactor biosynthesis; biotin biosynthesis; biotin from 7,8-diaminononanoate: step 2/2. In terms of biological role, catalyzes the conversion of dethiobiotin (DTB) to biotin by the insertion of a sulfur atom into dethiobiotin via a radical-based mechanism. This chain is Biotin synthase, found in Thermotoga petrophila (strain ATCC BAA-488 / DSM 13995 / JCM 10881 / RKU-1).